The sequence spans 202 residues: Pyridoxal 5'-phosphate synthase subunit PdxT (202 aa).

L-glutamine is bound at residue 50-52; it reads GES. C82 acts as the Nucleophile in catalysis. L-glutamine-binding positions include R111 and 140 to 141; that span reads IR. Active-site charge relay system residues include H176 and E178.

This sequence belongs to the glutaminase PdxT/SNO family. As to quaternary structure, in the presence of PdxS, forms a dodecamer of heterodimers. Only shows activity in the heterodimer.

The enzyme catalyses aldehydo-D-ribose 5-phosphate + D-glyceraldehyde 3-phosphate + L-glutamine = pyridoxal 5'-phosphate + L-glutamate + phosphate + 3 H2O + H(+). It carries out the reaction L-glutamine + H2O = L-glutamate + NH4(+). It functions in the pathway cofactor biosynthesis; pyridoxal 5'-phosphate biosynthesis. Functionally, catalyzes the hydrolysis of glutamine to glutamate and ammonia as part of the biosynthesis of pyridoxal 5'-phosphate. The resulting ammonia molecule is channeled to the active site of PdxS. This Streptomyces coelicolor (strain ATCC BAA-471 / A3(2) / M145) protein is Pyridoxal 5'-phosphate synthase subunit PdxT.